Consider the following 159-residue polypeptide: MESRPSGRQHASEGDGDQSPTQCAGMRSSGRSDQPYVLKGNPLLLRVRCYSGCASGSGRQLQLSVFQDLNQFSHCRVWRSPALIVKGEPPWCSQQDTQSPFQTGTPLERPCFRMKLSGWELTKNAQRALGSKLQHILSLDSTQACGAGGPTILRPPRAP.

Positions 1–13 are enriched in basic and acidic residues; the sequence is MESRPSGRQHASE. The segment at 1–35 is disordered; the sequence is MESRPSGRQHASEGDGDQSPTQCAGMRSSGRSDQP.

This is an uncharacterized protein from Homo sapiens (Human).